We begin with the raw amino-acid sequence, 243 residues long: Homeobox protein goosecoid isoform B (243 aa).

The segment at residues 148 to 207 (KRRHRTIFTDEQLEALENLFQETKYPDVGTREQLARRVHLREEKVEVWFKNRRAKWRRQK) is a DNA-binding region (homeobox). The disordered stretch occupies residues 201–243 (AKWRRQKRSSSEESENAQKWNKSSKNSAEKRDEQAKSDLDSDS). The segment covering 217–226 (AQKWNKSSKN) has biased composition (polar residues). The span at 227–243 (SAEKRDEQAKSDLDSDS) shows a compositional bias: basic and acidic residues.

It belongs to the paired homeobox family. Bicoid subfamily.

Its subcellular location is the nucleus. Functionally, plays a central role in executing Spemann's organizer phenomenon (the dorsal blastopore lip of the early Xenopus laevis gastrula can organize a complete secondary body axis when transplanted to another embryo). In Xenopus laevis (African clawed frog), this protein is Homeobox protein goosecoid isoform B (gsc-b).